A 325-amino-acid polypeptide reads, in one-letter code: MIARIWSGKSPLWLLLLPLSWLYGLVSGLIRLCYRIGIKRSWRAPVPVVVVGNLTAGGNGKTPVVIWLVEQLAHRGIQAGVVSRGYGGKAESYPLLLTSQTTTEQAGDEPVLIFQRTGAPVAVSPNRSEAVQVLLAAHPVDIVITDDGLQHYALARDKEIVVIDGVRRFGNGWWLPAGPMRERASRLRTVDAVIVNGGEALPGEIPMRLIPSQAVNLLTGERREVSQLPALVAMAGIGHPPRFFATLEQCGAHLEARIPLADHQALSIVDVDPLVTVNQNLIMTEKDAVKCRAFAKSNWWYLPVDAEFSGEKPELLLQELMSLVR.

ATP is bound at residue 55 to 62; it reads TAGGNGKT.

This sequence belongs to the LpxK family.

It catalyses the reaction a lipid A disaccharide + ATP = a lipid IVA + ADP + H(+). Its pathway is glycolipid biosynthesis; lipid IV(A) biosynthesis; lipid IV(A) from (3R)-3-hydroxytetradecanoyl-[acyl-carrier-protein] and UDP-N-acetyl-alpha-D-glucosamine: step 6/6. Transfers the gamma-phosphate of ATP to the 4'-position of a tetraacyldisaccharide 1-phosphate intermediate (termed DS-1-P) to form tetraacyldisaccharide 1,4'-bis-phosphate (lipid IVA). The polypeptide is Tetraacyldisaccharide 4'-kinase (Enterobacter sp. (strain 638)).